We begin with the raw amino-acid sequence, 158 residues long: Protein Smg homolog (158 aa).

This sequence belongs to the Smg family.

This Coxiella burnetii (strain Dugway 5J108-111) protein is Protein Smg homolog.